We begin with the raw amino-acid sequence, 296 residues long: MSFPTDMETNEILDQLDKIDERNEDILLKSLKASKCTYKPWSREEFLRRLLTYRSRWAYVNDPQIGEINCCLNGWLCESNNILVCDVCRNKINLTALQQVDAENDSLNELPEKTKERLEVSLKEEHQDNCLWRLHKFPPDIYHLSVSAELVQVGRRFNSLSTRLVSTHLPEEMTLKRLEKVANKIRVDWEKEDAAVLLGIALTGWSEQVPGRLYVCNYCHRRLGVWNLQSEGQDFDVLEEHKKSCPWVIPQPFTDLLGWQQIFELLCKESIFQSTTKTMDVSQYTDYTFSLLQGLR.

A C3HC-type zinc finger spans residues 40-174; the sequence is PWSREEFLRR…VSTHLPEEMT (135 aa).

The protein resides in the cytoplasm. Its subcellular location is the nucleus. Its function is as follows. Involved in the export of mRNA from the nucleus to the cytoplasm. This chain is mRNA export factor rsm1 (rsm1), found in Schizosaccharomyces pombe (strain 972 / ATCC 24843) (Fission yeast).